We begin with the raw amino-acid sequence, 247 residues long: RNA-free ribonuclease P (247 aa).

The protein belongs to the HARP family.

The enzyme catalyses Endonucleolytic cleavage of RNA, removing 5'-extranucleotides from tRNA precursor.. In terms of biological role, RNA-free RNase P that catalyzes the removal of the 5'-leader sequence from pre-tRNA to produce the mature 5'-terminus. This is RNA-free ribonuclease P from Methanosarcina mazei (strain ATCC BAA-159 / DSM 3647 / Goe1 / Go1 / JCM 11833 / OCM 88) (Methanosarcina frisia).